The following is a 148-amino-acid chain: Small ribosomal subunit protein eS6 (148 aa).

It belongs to the eukaryotic ribosomal protein eS6 family.

This Pyrobaculum arsenaticum (strain DSM 13514 / JCM 11321 / PZ6) protein is Small ribosomal subunit protein eS6.